Reading from the N-terminus, the 298-residue chain is Phosphatidylglycerol--prolipoprotein diacylglyceryl transferase (298 aa).

Helical transmembrane passes span 17 to 37, 59 to 79, and 97 to 117; these read LAVR…IVVG, MMFY…VLFY, and GGMS…LFAW. Arg142 is an a 1,2-diacyl-sn-glycero-3-phospho-(1'-sn-glycerol) binding site. The next 2 helical transmembrane spans lie at 230–250 and 257–277; these read MGAI…TVEF and FLGL…PMIV.

The protein belongs to the Lgt family.

Its subcellular location is the cell inner membrane. The catalysed reaction is L-cysteinyl-[prolipoprotein] + a 1,2-diacyl-sn-glycero-3-phospho-(1'-sn-glycerol) = an S-1,2-diacyl-sn-glyceryl-L-cysteinyl-[prolipoprotein] + sn-glycerol 1-phosphate + H(+). The protein operates within protein modification; lipoprotein biosynthesis (diacylglyceryl transfer). Its function is as follows. Catalyzes the transfer of the diacylglyceryl group from phosphatidylglycerol to the sulfhydryl group of the N-terminal cysteine of a prolipoprotein, the first step in the formation of mature lipoproteins. The chain is Phosphatidylglycerol--prolipoprotein diacylglyceryl transferase from Burkholderia cenocepacia (strain ATCC BAA-245 / DSM 16553 / LMG 16656 / NCTC 13227 / J2315 / CF5610) (Burkholderia cepacia (strain J2315)).